A 335-amino-acid chain; its full sequence is Large ribosomal subunit protein uL3 (335 aa).

The disordered stretch occupies residues 1-20; it reads MATIHRPRRGSLAFSPRKRA.

This sequence belongs to the universal ribosomal protein uL3 family. Part of the 50S ribosomal subunit. Forms a cluster with proteins L14 and L24e.

Its function is as follows. One of the primary rRNA binding proteins, it binds directly near the 3'-end of the 23S rRNA, where it nucleates assembly of the 50S subunit. In Methanothrix harundinacea (strain 6Ac) (Methanosaeta harundinacea), this protein is Large ribosomal subunit protein uL3 (rpl3).